A 342-amino-acid chain; its full sequence is Flap endonuclease 1 (342 aa).

Positions 1–99 (MGVKIGELIE…RAIEERVRAR (99 aa)) are N-domain. Mg(2+)-binding residues include Asp28, Asp81, Glu153, Glu155, Asp174, Asp176, and Asp237. Residues 117 to 259 (EARKYAQAAL…RALELVKKYK (143 aa)) are I-domain.

The protein belongs to the XPG/RAD2 endonuclease family. FEN1 subfamily. Interacts with PCNA. PCNA stimulates the nuclease activity without altering cleavage specificity. The cofactor is Mg(2+).

Functionally, structure-specific nuclease with 5'-flap endonuclease and 5'-3' exonuclease activities involved in DNA replication and repair. During DNA replication, cleaves the 5'-overhanging flap structure that is generated by displacement synthesis when DNA polymerase encounters the 5'-end of a downstream Okazaki fragment. Binds the unpaired 3'-DNA end and kinks the DNA to facilitate 5' cleavage specificity. Cleaves one nucleotide into the double-stranded DNA from the junction in flap DNA, leaving a nick for ligation. Also involved in the base excision repair (BER) pathway. Acts as a genome stabilization factor that prevents flaps from equilibrating into structures that lead to duplications and deletions. Also possesses 5'-3' exonuclease activity on nicked or gapped double-stranded DNA. This is Flap endonuclease 1 from Korarchaeum cryptofilum (strain OPF8).